The sequence spans 427 residues: Enolase (427 aa).

A (2R)-2-phosphoglycerate-binding site is contributed by Q163. Residue E205 is the Proton donor of the active site. Residues D242, E285, and D312 each contribute to the Mg(2+) site. Positions 337, 366, 367, and 388 each coordinate (2R)-2-phosphoglycerate. Catalysis depends on K337, which acts as the Proton acceptor.

It belongs to the enolase family. Mg(2+) is required as a cofactor.

The protein localises to the cytoplasm. It localises to the secreted. It is found in the cell surface. It carries out the reaction (2R)-2-phosphoglycerate = phosphoenolpyruvate + H2O. It participates in carbohydrate degradation; glycolysis; pyruvate from D-glyceraldehyde 3-phosphate: step 4/5. Catalyzes the reversible conversion of 2-phosphoglycerate (2-PG) into phosphoenolpyruvate (PEP). It is essential for the degradation of carbohydrates via glycolysis. The polypeptide is Enolase (Rhodopseudomonas palustris (strain BisA53)).